A 418-amino-acid chain; its full sequence is MIFDKDDFKAYDADLWNAIAKEEERQQNNIELIASENVVSKAVMAAQGSILTNKYAEGYPGRRYYGGTDVVDVVETLAIERAKEIFGAKFANVQPHSGSQANCAAYMSLIEPGDTVMGMDLAAGGHLTHGAPVSFSGQTYNFLSYSVDPETELLDFDAILKQAQEVKPKLIVAGASAYSQIIDFSKFREIADAVGAKLMVDMAHIAGLVAAGLHPSPVPYAHITTTTTHKTLRGPRGGLILTNDEDLAKKINSAIFPGIQGGPLEHVVAAKAVSFKEVLDPAFKEYAANVIKNSKAMADVFLQDPDFRIISGGTENHLFLVDVTKVVENGKVAQNLLDEVNITLNKNSIPYETLSPFKTSGIRIGAAAITARGFGEEESRKVAELIIKTLKNSENEAVLEEVRSAVKELTDAFPLYEE.

Residues Leu121 and Gly125 to Leu127 each bind (6S)-5,6,7,8-tetrahydrofolate. The residue at position 230 (Lys230) is an N6-(pyridoxal phosphate)lysine. Residue Ser355 to Phe357 coordinates (6S)-5,6,7,8-tetrahydrofolate.

Belongs to the SHMT family. Homodimer. Requires pyridoxal 5'-phosphate as cofactor.

It localises to the cytoplasm. The enzyme catalyses (6R)-5,10-methylene-5,6,7,8-tetrahydrofolate + glycine + H2O = (6S)-5,6,7,8-tetrahydrofolate + L-serine. It participates in one-carbon metabolism; tetrahydrofolate interconversion. It functions in the pathway amino-acid biosynthesis; glycine biosynthesis; glycine from L-serine: step 1/1. Its function is as follows. Catalyzes the reversible interconversion of serine and glycine with tetrahydrofolate (THF) serving as the one-carbon carrier. This reaction serves as the major source of one-carbon groups required for the biosynthesis of purines, thymidylate, methionine, and other important biomolecules. Also exhibits THF-independent aldolase activity toward beta-hydroxyamino acids, producing glycine and aldehydes, via a retro-aldol mechanism. This chain is Serine hydroxymethyltransferase, found in Streptococcus pneumoniae (strain P1031).